Here is a 99-residue protein sequence, read N- to C-terminus: Signal recognition particle 19 kDa protein (99 aa).

The protein belongs to the SRP19 family. As to quaternary structure, part of the signal recognition particle protein translocation system, which is composed of SRP and FtsY. Archaeal SRP consists of a 7S RNA molecule of 300 nucleotides and two protein subunits: SRP54 and SRP19.

The protein localises to the cytoplasm. Involved in targeting and insertion of nascent membrane proteins into the cytoplasmic membrane. Binds directly to 7S RNA and mediates binding of the 54 kDa subunit of the SRP. The polypeptide is Signal recognition particle 19 kDa protein (Ignicoccus hospitalis (strain KIN4/I / DSM 18386 / JCM 14125)).